The following is a 554-amino-acid chain: Potassium-transporting ATPase potassium-binding subunit (554 aa).

12 consecutive transmembrane segments (helical) span residues Met1 to Ala21, Trp59 to Leu79, Gly131 to Val151, Val174 to Ile194, Pro246 to Thr266, Gly279 to Trp299, Phe323 to Val343, Gly352 to Val372, Gly375 to Gly395, Phe412 to Met432, Ile481 to Gly501, and Gly525 to Leu545.

It belongs to the KdpA family. The system is composed of three essential subunits: KdpA, KdpB and KdpC.

The protein resides in the cell membrane. In terms of biological role, part of the high-affinity ATP-driven potassium transport (or Kdp) system, which catalyzes the hydrolysis of ATP coupled with the electrogenic transport of potassium into the cytoplasm. This subunit binds the extracellular potassium ions and delivers the ions to the membrane domain of KdpB through an intramembrane tunnel. This Streptomyces griseus subsp. griseus (strain JCM 4626 / CBS 651.72 / NBRC 13350 / KCC S-0626 / ISP 5235) protein is Potassium-transporting ATPase potassium-binding subunit.